We begin with the raw amino-acid sequence, 828 residues long: Periplasmic nitrate reductase (828 aa).

The tat-type signal signal peptide spans 1–32 (MNLSRRDFMKANAAMAAATAAGLSIPVKNVEA). Positions 37 to 93 (IKWDKAVCRFCGTGCAVLVGTKDGRVVASQGDPDAEVNRGLNCIKGYFLPKIMYGKD) constitute a 4Fe-4S Mo/W bis-MGD-type domain. Residues Cys-44, Cys-47, Cys-51, and Cys-79 each coordinate [4Fe-4S] cluster. Mo-bis(molybdopterin guanine dinucleotide)-binding positions include Lys-81, Gln-148, Asn-173, Cys-177, 210-217 (WGSNMAEM), 241-245 (STFEH), Met-371, Gln-375, Asn-481, 507-508 (SD), Lys-530, Asp-557, and 717-726 (TGRVLEHWHT). Phe-793 is a substrate binding site. Asn-801 and Lys-818 together coordinate Mo-bis(molybdopterin guanine dinucleotide).

The protein belongs to the prokaryotic molybdopterin-containing oxidoreductase family. NasA/NapA/NarB subfamily. As to quaternary structure, component of the periplasmic nitrate reductase NapAB complex composed of NapA and NapB. The cofactor is [4Fe-4S] cluster. Mo-bis(molybdopterin guanine dinucleotide) serves as cofactor. In terms of processing, predicted to be exported by the Tat system. The position of the signal peptide cleavage has not been experimentally proven.

It localises to the periplasm. The enzyme catalyses 2 Fe(II)-[cytochrome] + nitrate + 2 H(+) = 2 Fe(III)-[cytochrome] + nitrite + H2O. Its function is as follows. Catalytic subunit of the periplasmic nitrate reductase complex NapAB. Receives electrons from NapB and catalyzes the reduction of nitrate to nitrite. In Aggregatibacter actinomycetemcomitans (Actinobacillus actinomycetemcomitans), this protein is Periplasmic nitrate reductase.